The sequence spans 360 residues: Phospho-N-acetylmuramoyl-pentapeptide-transferase (360 aa).

The next 10 membrane-spanning stretches (helical) occupy residues 27 to 47 (GALI…ISSL), 70 to 90 (GTPT…SILW), 93 to 113 (LSSV…AIGF), 134 to 154 (LALE…AGQE), 168 to 188 (LLLN…VGAG), 205 to 225 (VMVA…AIFA), 239 to 259 (LSVI…FNAP), 262 to 282 (AIFM…TVAV), 288 to 308 (IVLA…IIQV), and 337 to 357 (QVVI…LSTL).

This sequence belongs to the glycosyltransferase 4 family. MraY subfamily. Mg(2+) serves as cofactor.

It is found in the cell inner membrane. It carries out the reaction UDP-N-acetyl-alpha-D-muramoyl-L-alanyl-gamma-D-glutamyl-meso-2,6-diaminopimeloyl-D-alanyl-D-alanine + di-trans,octa-cis-undecaprenyl phosphate = di-trans,octa-cis-undecaprenyl diphospho-N-acetyl-alpha-D-muramoyl-L-alanyl-D-glutamyl-meso-2,6-diaminopimeloyl-D-alanyl-D-alanine + UMP. The protein operates within cell wall biogenesis; peptidoglycan biosynthesis. Its function is as follows. Catalyzes the initial step of the lipid cycle reactions in the biosynthesis of the cell wall peptidoglycan: transfers peptidoglycan precursor phospho-MurNAc-pentapeptide from UDP-MurNAc-pentapeptide onto the lipid carrier undecaprenyl phosphate, yielding undecaprenyl-pyrophosphoryl-MurNAc-pentapeptide, known as lipid I. The polypeptide is Phospho-N-acetylmuramoyl-pentapeptide-transferase (Chelativorans sp. (strain BNC1)).